Reading from the N-terminus, the 177-residue chain is Alkyl hydroperoxide reductase AhpD (177 aa).

Cysteine 130 acts as the Proton donor in catalysis. Residues cysteine 130 and cysteine 133 are joined by a disulfide bond. Cysteine 133 (cysteine sulfenic acid (-SOH) intermediate) is an active-site residue.

This sequence belongs to the AhpD family. Homotrimer.

The catalysed reaction is N(6)-[(R)-dihydrolipoyl]-L-lysyl-[lipoyl-carrier protein] + a hydroperoxide = N(6)-[(R)-lipoyl]-L-lysyl-[lipoyl-carrier protein] + an alcohol + H2O. Its function is as follows. Antioxidant protein with alkyl hydroperoxidase activity. Required for the reduction of the AhpC active site cysteine residues and for the regeneration of the AhpC enzyme activity. The polypeptide is Alkyl hydroperoxide reductase AhpD (Mycobacterium bovis (strain ATCC BAA-935 / AF2122/97)).